The chain runs to 123 residues: Phosphoribosyl-AMP cyclohydrolase (123 aa).

D73 provides a ligand contact to Mg(2+). C74 is a binding site for Zn(2+). 2 residues coordinate Mg(2+): D75 and D77. Positions 90 and 97 each coordinate Zn(2+).

This sequence belongs to the PRA-CH family. Homodimer. Mg(2+) serves as cofactor. Zn(2+) is required as a cofactor.

It is found in the cytoplasm. It carries out the reaction 1-(5-phospho-beta-D-ribosyl)-5'-AMP + H2O = 1-(5-phospho-beta-D-ribosyl)-5-[(5-phospho-beta-D-ribosylamino)methylideneamino]imidazole-4-carboxamide. It functions in the pathway amino-acid biosynthesis; L-histidine biosynthesis; L-histidine from 5-phospho-alpha-D-ribose 1-diphosphate: step 3/9. Functionally, catalyzes the hydrolysis of the adenine ring of phosphoribosyl-AMP. The protein is Phosphoribosyl-AMP cyclohydrolase of Methanoregula boonei (strain DSM 21154 / JCM 14090 / 6A8).